The sequence spans 465 residues: Asparagine--tRNA ligase (465 aa).

The protein belongs to the class-II aminoacyl-tRNA synthetase family. Homodimer.

It is found in the cytoplasm. The catalysed reaction is tRNA(Asn) + L-asparagine + ATP = L-asparaginyl-tRNA(Asn) + AMP + diphosphate + H(+). The protein is Asparagine--tRNA ligase of Pseudoalteromonas atlantica (strain T6c / ATCC BAA-1087).